Here is a 304-residue protein sequence, read N- to C-terminus: Coenzyme PQQ synthesis protein B (304 aa).

This sequence belongs to the PqqB family.

It functions in the pathway cofactor biosynthesis; pyrroloquinoline quinone biosynthesis. In terms of biological role, may be involved in the transport of PQQ or its precursor to the periplasm. This Ectopseudomonas mendocina (strain ymp) (Pseudomonas mendocina) protein is Coenzyme PQQ synthesis protein B.